A 344-amino-acid chain; its full sequence is Enoyl-[acyl-carrier-protein] reductase, mitochondrial (344 aa).

The N-terminal 14 residues, 1 to 14, are a transit peptide targeting the mitochondrion; that stretch reads MLKVLSLRSALQRA. The Proton donor role is filled by tyrosine 69. NADP(+)-binding positions include asparagine 142, 168 to 171, 191 to 193, 255 to 258, 280 to 282, and lysine 338; these read NSAV, RSR, YGGM, and FWM.

Belongs to the zinc-containing alcohol dehydrogenase family. Quinone oxidoreductase subfamily. As to quaternary structure, homodimer.

The protein localises to the mitochondrion. The catalysed reaction is a 2,3-saturated acyl-[ACP] + NADP(+) = a (2E)-enoyl-[ACP] + NADPH + H(+). Catalyzes the NADPH-dependent reduction of trans-2-enoyl thioesters in mitochondrial fatty acid synthesis (fatty acid synthesis type II). Fatty acid chain elongation in mitochondria uses acyl carrier protein (ACP) as an acyl group carrier, but the enzyme accepts both ACP and CoA thioesters as substrates in vitro. May provide the octanoyl chain used for lipoic acid biosynthesis, regulating protein lipoylation and mitochondrial respiratory activity. Involved in iron homeostasis; affecting Fe-S cluster assembly and ceramide metabolism. Required for proper morphology and bioenergetic functions of mitochondria. Required for maintenance of neurons. In Caenorhabditis elegans, this protein is Enoyl-[acyl-carrier-protein] reductase, mitochondrial.